The sequence spans 180 residues: Interleukin-1-binding protein (180 aa).

Residues 1–20 (MSILPVIFLPIFFYSPFVQT) form the signal peptide. Residues Asn80, Asn103, and Asn113 are each glycosylated (N-linked (GlcNAc...) asparagine; by host).

The protein belongs to the interleukin-1 receptor family. As to quaternary structure, interacts with mouse Il1b.

The protein resides in the secreted. In terms of biological role, may reduce the host inflammatory response by interacting with inteleukin-1 beta (Il1b) and thus decreasing the association between IL1B and its cellular receptor. This chain is Interleukin-1-binding protein (OPG201), found in Monkeypox virus.